We begin with the raw amino-acid sequence, 152 residues long: Transcriptional regulator MraZ (152 aa).

SpoVT-AbrB domains lie at 5-52 and 81-124; these read VNQL…PLPE and AQEL…DESL.

Belongs to the MraZ family. In terms of assembly, forms oligomers.

It is found in the cytoplasm. Its subcellular location is the nucleoid. The sequence is that of Transcriptional regulator MraZ from Halorhodospira halophila (strain DSM 244 / SL1) (Ectothiorhodospira halophila (strain DSM 244 / SL1)).